A 657-amino-acid chain; its full sequence is Probable intron-encoded endonuclease aI2 (657 aa).

Residues 1-245 (MKQMSYVTRW…TYEHLFWFFG (245 aa)) are COX1 exons 1 to 2 encoded. Transmembrane regions (helical) follow at residues 19–39 (IGMTYLGFGMLSAMMGTGMSV), 69–89 (LLMMFFFIMPVWMGAFGNFFL), 103–123 (LNNISFWCLPPALVCMVCSVL), 152–172 (AMFAMHLTSMSSLLGAMNFMV), 188–208 (PLFAWAMFLTAMLLLLSLPVL), and 269–289 (MYFIMLLITMYMSTNLLANMV). The tract at residues 246-657 (QWWPTNYVNN…KFENKWNKKF (412 aa)) is COX1 intron 2 encoded.

The protein in the C-terminal section; belongs to the LAGLIDADG endonuclease family. It in the N-terminal section; belongs to the heme-copper respiratory oxidase family. The mature protein may arise from proteolytic cleavage of an in-frame translation of COX1 exons 1 and 2 plus intron 2, containing the aI2 open reading frame.

It localises to the mitochondrion. The protein resides in the membrane. In terms of biological role, mitochondrial DNA endonuclease involved in intron homing. The sequence is that of Probable intron-encoded endonuclease aI2 (aI2) from Debaryomyces hansenii (strain ATCC 36239 / CBS 767 / BCRC 21394 / JCM 1990 / NBRC 0083 / IGC 2968) (Yeast).